A 379-amino-acid chain; its full sequence is Cytochrome b (379 aa).

Helical transmembrane passes span 33–53, 77–98, 113–133, and 178–198; these read FGSL…FLAM, WMIR…FMHV, WNIG…GYVL, and FFAF…VHLL. The heme b site is built by H83 and H97. Positions 182 and 196 each coordinate heme b. H201 serves as a coordination point for a ubiquinone. The next 4 helical transmembrane spans lie at 226-246, 288-308, 320-340, and 347-367; these read IKDI…VLFS, LGGV…PMLH, LSQC…WIGG, and FITI…XLMP.

The protein belongs to the cytochrome b family. As to quaternary structure, the cytochrome bc1 complex contains 11 subunits: 3 respiratory subunits (MT-CYB, CYC1 and UQCRFS1), 2 core proteins (UQCRC1 and UQCRC2) and 6 low-molecular weight proteins (UQCRH/QCR6, UQCRB/QCR7, UQCRQ/QCR8, UQCR10/QCR9, UQCR11/QCR10 and a cleavage product of UQCRFS1). This cytochrome bc1 complex then forms a dimer. Heme b serves as cofactor.

Its subcellular location is the mitochondrion inner membrane. Component of the ubiquinol-cytochrome c reductase complex (complex III or cytochrome b-c1 complex) that is part of the mitochondrial respiratory chain. The b-c1 complex mediates electron transfer from ubiquinol to cytochrome c. Contributes to the generation of a proton gradient across the mitochondrial membrane that is then used for ATP synthesis. The chain is Cytochrome b (MT-CYB) from Chrotogale owstoni (Owston's palm civet).